We begin with the raw amino-acid sequence, 228 residues long: Putative L-ribulose-5-phosphate 4-epimerase UlaF (228 aa).

Substrate contacts are provided by residues 26 to 27, 43 to 44, and 72 to 73; these read GN, SG, and SS. Zn(2+) contacts are provided by aspartate 74, histidine 93, and histidine 95. Aspartate 118 serves as the catalytic Proton donor/acceptor. Histidine 167 contributes to the Zn(2+) binding site. Residue tyrosine 225 is the Proton donor/acceptor of the active site.

This sequence belongs to the aldolase class II family. AraD/FucA subfamily. The cofactor is Zn(2+).

It carries out the reaction L-ribulose 5-phosphate = D-xylulose 5-phosphate. It functions in the pathway cofactor degradation; L-ascorbate degradation; D-xylulose 5-phosphate from L-ascorbate: step 4/4. Its function is as follows. Catalyzes the isomerization of L-ribulose 5-phosphate to D-xylulose 5-phosphate. Is involved in the anaerobic L-ascorbate utilization. The polypeptide is Putative L-ribulose-5-phosphate 4-epimerase UlaF (Shigella boydii serotype 4 (strain Sb227)).